A 212-amino-acid polypeptide reads, in one-letter code: dTTP/UTP pyrophosphatase (212 aa).

D88 serves as the catalytic Proton acceptor.

The protein belongs to the Maf family. YhdE subfamily. The cofactor is a divalent metal cation.

It localises to the cytoplasm. The enzyme catalyses dTTP + H2O = dTMP + diphosphate + H(+). The catalysed reaction is UTP + H2O = UMP + diphosphate + H(+). Nucleoside triphosphate pyrophosphatase that hydrolyzes dTTP and UTP. May have a dual role in cell division arrest and in preventing the incorporation of modified nucleotides into cellular nucleic acids. The protein is dTTP/UTP pyrophosphatase of Colwellia psychrerythraea (strain 34H / ATCC BAA-681) (Vibrio psychroerythus).